Consider the following 341-residue polypeptide: Krueppel-like factor 17 (341 aa).

Positions 214–252 (VTESNTQEEPFVREPPTPAPEGAESPSTSRGATRRQSPV) are disordered. Over residues 238–252 (SPSTSRGATRRQSPV) the composition is skewed to polar residues. C2H2-type zinc fingers lie at residues 256–280 (YVCT…QRKH), 286–310 (FACD…KRIH), and 316–338 (HKCD…KRTH).

This sequence belongs to the Sp1 C2H2-type zinc-finger protein family. In terms of tissue distribution, exclusively expressed in testis and ovary. Localized to step 3-8 spermatids in testis and growing oocytes in ovary.

It is found in the nucleus. Transcription repressor that binds to the promoter of target genes and prevents their expression. Acts as a negative regulator of epithelial-mesenchymal transition and metastasis in breast cancer. Specifically binds the 5'-CACCC-3' sequence in the promoter of ID1, a key metastasis regulator in breast cancer, and repress its expression. May be a germ cell-specific transcription factor that plays important roles in spermatid differentiation and oocyte development. In Mus musculus (Mouse), this protein is Krueppel-like factor 17 (Klf17).